The chain runs to 250 residues: DNA repair protein RecO (250 aa).

The protein belongs to the RecO family.

Involved in DNA repair and RecF pathway recombination. In Beijerinckia indica subsp. indica (strain ATCC 9039 / DSM 1715 / NCIMB 8712), this protein is DNA repair protein RecO.